The primary structure comprises 378 residues: Filamin-binding LIM protein 1 (378 aa).

Residues 1–69 form a filamin-binding region; it reads MASKPEKRVA…RSWMPPGRAA (69 aa). The interval 38-179 is disordered; the sequence is WPGRPWESAP…PPPEEPVSFP (142 aa). A compositionally biased stretch (pro residues) spans 103-115; it reads LPPPPPPPAADLP. 3 consecutive LIM zinc-binding domains span residues 186-247, 248-305, and 306-375; these read DICA…TLEK, CGKC…RKFA, and PVCS…RSAA. The tract at residues 281–378 is PLEKHC1-binding; that stretch reads IGDESFALDS…HVKRSAAGCC (98 aa).

As to quaternary structure, interacts with PLEKHC1, FLNA, FLNB and FLNC. Interacts with NKX2-5.

The protein resides in the cell junction. It localises to the focal adhesion. It is found in the cytoplasm. Its subcellular location is the cytoskeleton. The protein localises to the stress fiber. In terms of biological role, serves as an anchoring site for cell-ECM adhesion proteins and filamin-containing actin filaments. Is implicated in cell shape modulation (spreading) and motility. May participate in the regulation of filamin-mediated cross-linking and stabilization of actin filaments. May also regulate the assembly of filamin-containing signaling complexes that control actin assembly. Promotes dissociation of FLNA from ITGB3 and ITGB7. Promotes activation of integrins and regulates integrin-mediated cell-cell adhesion. This Bos taurus (Bovine) protein is Filamin-binding LIM protein 1 (FBLIM1).